The following is a 520-amino-acid chain: Glucose-6-phosphate isomerase (520 aa).

Glu-327 serves as the catalytic Proton donor. Active-site residues include His-358 and Lys-486.

It belongs to the GPI family.

The protein localises to the cytoplasm. The enzyme catalyses alpha-D-glucose 6-phosphate = beta-D-fructose 6-phosphate. Its pathway is carbohydrate biosynthesis; gluconeogenesis. It participates in carbohydrate degradation; glycolysis; D-glyceraldehyde 3-phosphate and glycerone phosphate from D-glucose: step 2/4. Its function is as follows. Catalyzes the reversible isomerization of glucose-6-phosphate to fructose-6-phosphate. The chain is Glucose-6-phosphate isomerase from Bordetella avium (strain 197N).